Here is a 253-residue protein sequence, read N- to C-terminus: uncharacterized protein (253 aa).

This sequence belongs to the NAD(P)-dependent epimerase/dehydratase family.

This is an uncharacterized protein from Bacillus subtilis (strain 168).